A 31-amino-acid chain; its full sequence is Photosystem II reaction center protein T (31 aa).

Residues 3–23 (SVAYIIVLAMALSVLFFAIAF) traverse the membrane as a helical segment.

The protein belongs to the PsbT family. PSII is composed of 1 copy each of membrane proteins PsbA, PsbB, PsbC, PsbD, PsbE, PsbF, PsbH, PsbI, PsbJ, PsbK, PsbL, PsbM, PsbT, PsbX, PsbY, PsbZ, Psb30/Ycf12, peripheral proteins PsbO, CyanoQ (PsbQ), PsbU, PsbV and a large number of cofactors. It forms dimeric complexes.

Its subcellular location is the cellular thylakoid membrane. Found at the monomer-monomer interface of the photosystem II (PS II) dimer, plays a role in assembly and dimerization of PSII. PSII is a light-driven water plastoquinone oxidoreductase, using light energy to abstract electrons from H(2)O, generating a proton gradient subsequently used for ATP formation. In Picosynechococcus sp. (strain ATCC 27264 / PCC 7002 / PR-6) (Agmenellum quadruplicatum), this protein is Photosystem II reaction center protein T.